A 1362-amino-acid polypeptide reads, in one-letter code: DNA-directed RNA polymerase subunit beta (1362 aa).

Belongs to the RNA polymerase beta chain family. As to quaternary structure, the RNAP catalytic core consists of 2 alpha, 1 beta, 1 beta' and 1 omega subunit. When a sigma factor is associated with the core the holoenzyme is formed, which can initiate transcription.

The enzyme catalyses RNA(n) + a ribonucleoside 5'-triphosphate = RNA(n+1) + diphosphate. In terms of biological role, DNA-dependent RNA polymerase catalyzes the transcription of DNA into RNA using the four ribonucleoside triphosphates as substrates. The protein is DNA-directed RNA polymerase subunit beta of Parvibaculum lavamentivorans (strain DS-1 / DSM 13023 / NCIMB 13966).